The primary structure comprises 505 residues: Glucan endo-1,3-beta-glucosidase 4 (505 aa).

The signal sequence occupies residues 1–23 (MLLPRWFAEALLLLLSILACSNA). N70 and N110 each carry an N-linked (GlcNAc...) asparagine glycan. E119 acts as the Proton donor in catalysis. N-linked (GlcNAc...) asparagine glycosylation is found at N178 and N256. E266 (nucleophile) is an active-site residue. N298, N338, and N357 each carry an N-linked (GlcNAc...) asparagine glycan. A disulfide bridge links C363 with C426. A glycan (N-linked (GlcNAc...) asparagine) is linked at N453. A474 is lipidated: GPI-anchor amidated alanine. The propeptide at 475 to 505 (NARIIFSYHLPILAPLALTLLQLLLQHDRLL) is removed in mature form.

Belongs to the glycosyl hydrolase 17 family. Post-translationally, contains two additional disulfide bonds.

It is found in the cell membrane. The catalysed reaction is Hydrolysis of (1-&gt;3)-beta-D-glucosidic linkages in (1-&gt;3)-beta-D-glucans.. The polypeptide is Glucan endo-1,3-beta-glucosidase 4 (Arabidopsis thaliana (Mouse-ear cress)).